Here is a 372-residue protein sequence, read N- to C-terminus: Solute carrier family 35 member F6 (372 aa).

The signal sequence occupies residues M1–G18. The next 2 membrane-spanning stretches (helical) occupy residues F48–L68 and L89–L109. The 56-residue stretch at M105–L160 folds into the EamA domain. N110 carries N-linked (GlcNAc...) asparagine glycosylation. A run of 7 helical transmembrane segments spans residues S116–L136, W145–S165, V176–L196, A211–Y231, L261–I281, M293–W312, and I320–L336. The residue at position 366 (T366) is a Phosphothreonine.

It belongs to the SLC35F solute transporter family. Interacts with SLC25A5.

The protein localises to the mitochondrion. Its subcellular location is the lysosome membrane. In terms of biological role, involved in the maintenance of mitochondrial membrane potential in pancreatic ductal adenocarcinoma (PDAC) cells. Promotes pancreatic ductal adenocarcinoma (PDAC) cell growth. May play a role as a nucleotide-sugar transporter. The protein is Solute carrier family 35 member F6 (Slc35f6) of Rattus norvegicus (Rat).